A 319-amino-acid chain; its full sequence is L-galactose dehydrogenase (319 aa).

Tyrosine 59 (proton donor) is an active-site residue. Residues 122–269 (HCHDIEFGSL…ANKEISSVLV (148 aa)) form the SIS domain. Histidine 124 is a substrate binding site.

This sequence belongs to the aldo/keto reductase family.

It carries out the reaction L-galactose + NAD(+) = L-galactono-1,4-lactone + NADH + H(+). Catalyzes the oxidation of L-galactose to L-galactono-1,4-lactone in the presence of NAD(+). Uses NAD(+) as a hydrogen acceptor much more efficiently than NADP(+). The sequence is that of L-galactose dehydrogenase (LGALDH) from Arabidopsis thaliana (Mouse-ear cress).